The primary structure comprises 115 residues: Parathyroid hormone (115 aa).

The signal sequence occupies residues 1–25 (MIPAKDMAKVMIVMLAICFLTKSDG). Residues 26 to 31 (KSVKKR) constitute a propeptide that is removed on maturation. Residues 51-69 (RVEWLRKKLQDVHNFIALG) form an important for receptor binding region. The tract at residues 72–96 (LAPRDAGSQRPRKKEDNILVESHEK) is disordered. Residues 84-96 (KKEDNILVESHEK) show a composition bias toward basic and acidic residues.

This sequence belongs to the parathyroid hormone family. As to quaternary structure, interacts with PTH1R (via N-terminal extracellular domain).

The protein localises to the secreted. Parathyroid hormone elevates calcium level by dissolving the salts in bone and preventing their renal excretion. Acts by binding to its receptor, PTH1R, activating G protein-coupled receptor signaling. Stimulates [1-14C]-2-deoxy-D-glucose (2DG) transport and glycogen synthesis in osteoblastic cells. The chain is Parathyroid hormone (PTH) from Macaca fascicularis (Crab-eating macaque).